The sequence spans 393 residues: MARQKFERNKPHVNIGTIGHVDHGKTTTTAAITMTLAKAGGAEVQNYEDIDKAPEEKERGITINTSHVEYETENRHYAHVDCPGHADYVKNMITGAAQMDGAILVVSAADGPMPQTREHILLASRVGVNHIVVFLNKADQVDDPELLELVEMEVRELLSEYGFDGDECPVVVGSALKAIEEGDDQCILDLMKAVDEYIPTPERATDQPFLMPVEDVFTITGRGTVATGRVERGVLHVGDEVQIVGMKEEIGKTTITGVEMFRKMLDEAMAGDNIGALLRGVQRDEIERGQVLAKPGSVTPHKKFVGQVYVLKKEEGGRHTPFFNGYRPQFYFRTTDVTGSIALPEGVEMVMPGDHIDMNVELITPVAMENNLRFAIREGGRTVGSGVVTSIVE.

One can recognise a tr-type G domain in the interval K10–E202. A G1 region spans residues G19–T26. G19–T26 is a GTP binding site. T26 is a Mg(2+) binding site. The interval G60–N64 is G2. Residues D81–G84 form a G3 region. GTP is bound by residues D81–H85 and N136–D139. A G4 region spans residues N136–D139. Residues S174 to L176 are G5.

The protein belongs to the TRAFAC class translation factor GTPase superfamily. Classic translation factor GTPase family. EF-Tu/EF-1A subfamily. In terms of assembly, monomer.

The protein resides in the cytoplasm. The enzyme catalyses GTP + H2O = GDP + phosphate + H(+). GTP hydrolase that promotes the GTP-dependent binding of aminoacyl-tRNA to the A-site of ribosomes during protein biosynthesis. The chain is Elongation factor Tu from Clostridium novyi (strain NT).